The primary structure comprises 310 residues: Aspartate carbamoyltransferase catalytic subunit (310 aa).

Carbamoyl phosphate contacts are provided by Arg-58 and Thr-59. Residue Lys-86 coordinates L-aspartate. Carbamoyl phosphate is bound by residues Arg-108, His-137, and Gln-140. L-aspartate-binding residues include Arg-170 and Arg-225. Residues Gly-264 and Pro-265 each coordinate carbamoyl phosphate.

It belongs to the aspartate/ornithine carbamoyltransferase superfamily. ATCase family. As to quaternary structure, heterododecamer (2C3:3R2) of six catalytic PyrB chains organized as two trimers (C3), and six regulatory PyrI chains organized as three dimers (R2).

The enzyme catalyses carbamoyl phosphate + L-aspartate = N-carbamoyl-L-aspartate + phosphate + H(+). Its pathway is pyrimidine metabolism; UMP biosynthesis via de novo pathway; (S)-dihydroorotate from bicarbonate: step 2/3. Catalyzes the condensation of carbamoyl phosphate and aspartate to form carbamoyl aspartate and inorganic phosphate, the committed step in the de novo pyrimidine nucleotide biosynthesis pathway. This is Aspartate carbamoyltransferase catalytic subunit from Coxiella burnetii (strain CbuG_Q212) (Coxiella burnetii (strain Q212)).